A 162-amino-acid polypeptide reads, in one-letter code: Regulatory protein RecX (162 aa).

Belongs to the RecX family.

The protein localises to the cytoplasm. In terms of biological role, modulates RecA activity. The protein is Regulatory protein RecX of Xanthomonas campestris pv. campestris (strain 8004).